The primary structure comprises 324 residues: Lactonase drp35 (324 aa).

Ca(2+) contacts are provided by glutamate 47, serine 109, glycine 111, aspartate 129, threonine 132, tyrosine 134, aspartate 137, asparagine 184, aspartate 235, and serine 236. The Proton donor role is filled by aspartate 235.

This sequence belongs to the SMP-30/CGR1 family. Ca(2+) is required as a cofactor.

It localises to the cytoplasm. In terms of biological role, exhibits lactonase activity. Acts in cells with perturbed membrane integrity and is possibly related to the membrane homeostasis. The sequence is that of Lactonase drp35 (drp35) from Staphylococcus aureus (strain MW2).